Consider the following 309-residue polypeptide: Jacalin-related lectin 25 (309 aa).

Residues 8-190 (MFKVGPIGSQ…LTSIGIYVCP (183 aa)) enclose the Jacalin-type lectin domain.

This sequence belongs to the jacalin lectin family.

The polypeptide is Jacalin-related lectin 25 (JAL25) (Arabidopsis thaliana (Mouse-ear cress)).